The following is a 1403-amino-acid chain: DNA-directed RNA polymerase subunit beta' (1403 aa).

Residues C70, C72, C85, and C88 each coordinate Zn(2+). Mg(2+)-binding residues include D460, D462, and D464. Positions 814, 888, 895, and 898 each coordinate Zn(2+). Positions 1369-1403 (RRKRRMLEQPESLTADTGTSHYGEDEISESGAATA) are disordered. Residues 1379 to 1388 (ESLTADTGTS) show a composition bias toward polar residues.

The protein belongs to the RNA polymerase beta' chain family. In terms of assembly, the RNAP catalytic core consists of 2 alpha, 1 beta, 1 beta' and 1 omega subunit. When a sigma factor is associated with the core the holoenzyme is formed, which can initiate transcription. It depends on Mg(2+) as a cofactor. The cofactor is Zn(2+).

It catalyses the reaction RNA(n) + a ribonucleoside 5'-triphosphate = RNA(n+1) + diphosphate. DNA-dependent RNA polymerase catalyzes the transcription of DNA into RNA using the four ribonucleoside triphosphates as substrates. The polypeptide is DNA-directed RNA polymerase subunit beta' (Nitrosococcus oceani (strain ATCC 19707 / BCRC 17464 / JCM 30415 / NCIMB 11848 / C-107)).